The primary structure comprises 419 residues: Serine--tRNA ligase (419 aa).

Residue 226–228 coordinates L-serine; that stretch reads TSE. Residues 257 to 259 and Val-273 contribute to the ATP site; that span reads RRE. Glu-280 contributes to the L-serine binding site. 344–347 is a binding site for ATP; that stretch reads ELTS. An L-serine-binding site is contributed by Thr-379.

The protein belongs to the class-II aminoacyl-tRNA synthetase family. Type-1 seryl-tRNA synthetase subfamily. Homodimer. The tRNA molecule binds across the dimer.

It is found in the cytoplasm. It carries out the reaction tRNA(Ser) + L-serine + ATP = L-seryl-tRNA(Ser) + AMP + diphosphate + H(+). The enzyme catalyses tRNA(Sec) + L-serine + ATP = L-seryl-tRNA(Sec) + AMP + diphosphate + H(+). The protein operates within aminoacyl-tRNA biosynthesis; selenocysteinyl-tRNA(Sec) biosynthesis; L-seryl-tRNA(Sec) from L-serine and tRNA(Sec): step 1/1. Catalyzes the attachment of serine to tRNA(Ser). Is also able to aminoacylate tRNA(Sec) with serine, to form the misacylated tRNA L-seryl-tRNA(Sec), which will be further converted into selenocysteinyl-tRNA(Sec). The sequence is that of Serine--tRNA ligase from Corynebacterium diphtheriae (strain ATCC 700971 / NCTC 13129 / Biotype gravis).